Consider the following 147-residue polypeptide: 3-dehydroquinate dehydratase (147 aa).

Residue tyrosine 22 is the Proton acceptor of the active site. 3 residues coordinate substrate: asparagine 76, histidine 82, and aspartate 89. The Proton donor role is filled by histidine 102. Residues 103–104 and arginine 113 contribute to the substrate site; that span reads IS.

The protein belongs to the type-II 3-dehydroquinase family. Homododecamer.

The enzyme catalyses 3-dehydroquinate = 3-dehydroshikimate + H2O. It participates in metabolic intermediate biosynthesis; chorismate biosynthesis; chorismate from D-erythrose 4-phosphate and phosphoenolpyruvate: step 3/7. Functionally, catalyzes a trans-dehydration via an enolate intermediate. The chain is 3-dehydroquinate dehydratase from Fusobacterium nucleatum subsp. nucleatum (strain ATCC 25586 / DSM 15643 / BCRC 10681 / CIP 101130 / JCM 8532 / KCTC 2640 / LMG 13131 / VPI 4355).